The sequence spans 820 residues: Trimethylamine-N-oxide reductase (820 aa).

The segment at residues 1-33 is a signal peptide (tat-type signal); that stretch reads MAITRRSFLKGVATTSAASVIGPSLLASASANA. Ser179 provides a ligand contact to Mo-bis(molybdopterin guanine dinucleotide).

It belongs to the prokaryotic molybdopterin-containing oxidoreductase family. The cofactor is Mo-bis(molybdopterin guanine dinucleotide). Post-translationally, predicted to be exported by the Tat system. The position of the signal peptide cleavage has not been experimentally proven.

The protein resides in the periplasm. The catalysed reaction is trimethylamine + 2 Fe(III)-[cytochrome c] + H2O = trimethylamine N-oxide + 2 Fe(II)-[cytochrome c] + 3 H(+). Functionally, reduces trimethylamine-N-oxide (TMAO) into trimethylamine; an anaerobic reaction coupled to energy-yielding reactions. The protein is Trimethylamine-N-oxide reductase (torA) of Vibrio parahaemolyticus serotype O3:K6 (strain RIMD 2210633).